The sequence spans 307 residues: MPVQHRTTVVGNTSTLKSPVGILRILEVIFACVTFSLVVHTGRWTGRIGDLCMFCWCFCFAVSLVILIVEFTGVQNRMPVSWKNFPITFAMYAVLMCLSATVIYPLQYLEDKAYSSEVRNYQIVAIVFSCLTTLAYIIEVSLTRAKPGEVTGYMATTPGLLKVLETFIACIIFVFISDPPLYDRHDALKWCLAVYCICFILSIVVIILCVGECTGWLPCAFNKFLSGYALLAVLMYASAMIIWPIFSFDRKHGGTASRPSNCRSSPGNLYAVCEWDKMVAVAVLTAVNLIAYVMDLVYSARLIFITV.

MARVEL domains are found at residues 15–148 (TLKS…AKPG) and 153–304 (YMAT…RLIF). 8 consecutive transmembrane segments (helical) span residues 19–39 (PVGI…SLVV), 51–71 (LCMF…IVEF), 85–105 (FPIT…VIYP), 123–143 (IVAI…VSLT), 156–176 (TTPG…FVFI), 190–210 (WCLA…ILCV), 228–248 (YALL…IFSF), and 278–298 (MVAV…DLVY).

This sequence belongs to the MAL family.

It localises to the membrane. This is Myeloid-associated differentiation marker homolog (myadm) from Xenopus laevis (African clawed frog).